Consider the following 259-residue polypeptide: Merozoite surface protein CMZ-8 (259 aa).

Residues 1–108 (PLPFSPPSTP…STPVSPPSSP (108 aa)) show a composition bias toward pro residues. Disordered stretches follow at residues 1–127 (PLPF…STSE) and 174–203 (RPGS…RHKG). A run of 15 repeats spans residues 5-11 (SPPSTPV), 12-18 (SPPSTPV), 19-25 (SPPSTPV), 26-32 (SPPSTPV), 33-39 (SPPSTPV), 40-46 (SPPSTPV), 47-53 (SPPSTPV), 54-60 (SPPSTPV), 61-67 (SPPSTPV), 68-74 (SPPSTPV), 75-81 (SPPSTPV), 82-88 (SPPSTPV), 89-95 (SPPSTPV), 96-102 (SPPSTPV), and 103-109 (SPPSSPA). A 15 X 7 AA repeats of S-P-P-S-T-P-V region spans residues 5 to 109 (SPPSTPVSPP…TPVSPPSSPA (105 aa)). Basic residues predominate over residues 184 to 203 (HCTRSTRSSRRMSRRHRHKG).

The protein is Merozoite surface protein CMZ-8 of Eimeria acervulina (Coccidian parasite).